Here is a 505-residue protein sequence, read N- to C-terminus: Zealexin A1 synthase (505 aa).

A helical transmembrane segment spans residues 7–26 (IAVGTVAVVAVLSKLKSAVT). C442 is a binding site for heme.

It belongs to the cytochrome P450 family. Requires heme as cofactor.

Its subcellular location is the membrane. It catalyses the reaction (S)-beta-macrocarpene + 3 reduced [NADPH--hemoprotein reductase] + 3 O2 = zealexin A1 + 3 oxidized [NADPH--hemoprotein reductase] + 4 H2O + 4 H(+). Functionally, involved in production of the antifungal phytoalexin zealexin A1. The enzyme sequentially oxidizes(S)-beta-macrocarpene via alcohol and aldehyde intermediates to form zealexin A1, a maize phytoalexin that provides biochemical protection against fungal infection. This is Zealexin A1 synthase from Zea mays (Maize).